The chain runs to 736 residues: Phosphoribosylformylglycinamidine synthase subunit PurL (736 aa).

Histidine 49 is an active-site residue. Tyrosine 52 and lysine 91 together coordinate ATP. Glutamate 93 is a Mg(2+) binding site. Substrate-binding positions include 94–97 and arginine 116; that span reads SHNH. Histidine 95 functions as the Proton acceptor in the catalytic mechanism. A Mg(2+)-binding site is contributed by aspartate 117. A substrate-binding site is contributed by glutamine 240. Mg(2+) is bound at residue aspartate 268. Position 312–314 (312–314) interacts with substrate; that stretch reads ESQ. ATP contacts are provided by aspartate 493 and glycine 530. Asparagine 531 contributes to the Mg(2+) binding site. Residue serine 533 participates in substrate binding.

This sequence belongs to the FGAMS family. Monomer. Part of the FGAM synthase complex composed of 1 PurL, 1 PurQ and 2 PurS subunits.

Its subcellular location is the cytoplasm. The catalysed reaction is N(2)-formyl-N(1)-(5-phospho-beta-D-ribosyl)glycinamide + L-glutamine + ATP + H2O = 2-formamido-N(1)-(5-O-phospho-beta-D-ribosyl)acetamidine + L-glutamate + ADP + phosphate + H(+). Its pathway is purine metabolism; IMP biosynthesis via de novo pathway; 5-amino-1-(5-phospho-D-ribosyl)imidazole from N(2)-formyl-N(1)-(5-phospho-D-ribosyl)glycinamide: step 1/2. Its function is as follows. Part of the phosphoribosylformylglycinamidine synthase complex involved in the purines biosynthetic pathway. Catalyzes the ATP-dependent conversion of formylglycinamide ribonucleotide (FGAR) and glutamine to yield formylglycinamidine ribonucleotide (FGAM) and glutamate. The FGAM synthase complex is composed of three subunits. PurQ produces an ammonia molecule by converting glutamine to glutamate. PurL transfers the ammonia molecule to FGAR to form FGAM in an ATP-dependent manner. PurS interacts with PurQ and PurL and is thought to assist in the transfer of the ammonia molecule from PurQ to PurL. In Rhodopseudomonas palustris (strain BisB18), this protein is Phosphoribosylformylglycinamidine synthase subunit PurL.